Here is a 393-residue protein sequence, read N- to C-terminus: Acetylornithine aminotransferase (393 aa).

Pyridoxal 5'-phosphate-binding positions include 105-106 and Phe-138; that span reads GA. Arg-141 contacts N(2)-acetyl-L-ornithine. 224 to 227 lines the pyridoxal 5'-phosphate pocket; it reads DEVQ. Residue Lys-253 is modified to N6-(pyridoxal phosphate)lysine. Ser-281 contacts N(2)-acetyl-L-ornithine. Residue Thr-282 participates in pyridoxal 5'-phosphate binding.

The protein belongs to the class-III pyridoxal-phosphate-dependent aminotransferase family. ArgD subfamily. As to quaternary structure, homodimer. Requires pyridoxal 5'-phosphate as cofactor.

It localises to the cytoplasm. The catalysed reaction is N(2)-acetyl-L-ornithine + 2-oxoglutarate = N-acetyl-L-glutamate 5-semialdehyde + L-glutamate. It functions in the pathway amino-acid biosynthesis; L-arginine biosynthesis; N(2)-acetyl-L-ornithine from L-glutamate: step 4/4. This chain is Acetylornithine aminotransferase, found in Haemophilus ducreyi (strain 35000HP / ATCC 700724).